The following is a 387-amino-acid chain: Formate-dependent phosphoribosylglycinamide formyltransferase (387 aa).

N(1)-(5-phospho-beta-D-ribosyl)glycinamide is bound by residues 12–13 and glutamate 72; that span reads EL. ATP-binding positions include arginine 104, lysine 145, 150–155, 185–188, and glutamate 193; these read SSGKGQ and EEFI. One can recognise an ATP-grasp domain in the interval 109–300; sequence DLAAKDLKLL…EFELHIRAIL (192 aa). Mg(2+)-binding residues include glutamate 258 and glutamate 270. N(1)-(5-phospho-beta-D-ribosyl)glycinamide contacts are provided by residues aspartate 277, lysine 348, and 355 to 356; that span reads RR.

It belongs to the PurK/PurT family. In terms of assembly, homodimer.

The enzyme catalyses N(1)-(5-phospho-beta-D-ribosyl)glycinamide + formate + ATP = N(2)-formyl-N(1)-(5-phospho-beta-D-ribosyl)glycinamide + ADP + phosphate + H(+). The protein operates within purine metabolism; IMP biosynthesis via de novo pathway; N(2)-formyl-N(1)-(5-phospho-D-ribosyl)glycinamide from N(1)-(5-phospho-D-ribosyl)glycinamide (formate route): step 1/1. In terms of biological role, involved in the de novo purine biosynthesis. Catalyzes the transfer of formate to 5-phospho-ribosyl-glycinamide (GAR), producing 5-phospho-ribosyl-N-formylglycinamide (FGAR). Formate is provided by PurU via hydrolysis of 10-formyl-tetrahydrofolate. The chain is Formate-dependent phosphoribosylglycinamide formyltransferase from Leptospira borgpetersenii serovar Hardjo-bovis (strain JB197).